The chain runs to 304 residues: Aspartate carbamoyltransferase catalytic subunit (304 aa).

R53 and T54 together coordinate carbamoyl phosphate. K82 contacts L-aspartate. Carbamoyl phosphate contacts are provided by R103, H131, and Q134. L-aspartate contacts are provided by R163 and R224. 2 residues coordinate carbamoyl phosphate: L263 and P264.

The protein belongs to the aspartate/ornithine carbamoyltransferase superfamily. ATCase family. In terms of assembly, heterooligomer of catalytic and regulatory chains.

It carries out the reaction carbamoyl phosphate + L-aspartate = N-carbamoyl-L-aspartate + phosphate + H(+). The protein operates within pyrimidine metabolism; UMP biosynthesis via de novo pathway; (S)-dihydroorotate from bicarbonate: step 2/3. Catalyzes the condensation of carbamoyl phosphate and aspartate to form carbamoyl aspartate and inorganic phosphate, the committed step in the de novo pyrimidine nucleotide biosynthesis pathway. This chain is Aspartate carbamoyltransferase catalytic subunit, found in Haloquadratum walsbyi (strain DSM 16790 / HBSQ001).